Consider the following 97-residue polypeptide: Co-chaperonin GroES (97 aa).

Belongs to the GroES chaperonin family. As to quaternary structure, heptamer of 7 subunits arranged in a ring. Interacts with the chaperonin GroEL.

The protein resides in the cytoplasm. Functionally, together with the chaperonin GroEL, plays an essential role in assisting protein folding. The GroEL-GroES system forms a nano-cage that allows encapsulation of the non-native substrate proteins and provides a physical environment optimized to promote and accelerate protein folding. GroES binds to the apical surface of the GroEL ring, thereby capping the opening of the GroEL channel. The polypeptide is Co-chaperonin GroES (Arthrobacter sp. (strain FB24)).